The primary structure comprises 1061 residues: Isoleucine--tRNA ligase (1061 aa).

Residues 50 to 60 (PYTSGSAHMGT) carry the 'HIGH' region motif. The 'KMSKS' region signature appears at 604 to 608 (KMSKS). Position 607 (K607) interacts with ATP.

This sequence belongs to the class-I aminoacyl-tRNA synthetase family. IleS type 2 subfamily. Monomer. The cofactor is Zn(2+).

The protein resides in the cytoplasm. It carries out the reaction tRNA(Ile) + L-isoleucine + ATP = L-isoleucyl-tRNA(Ile) + AMP + diphosphate. Functionally, catalyzes the attachment of isoleucine to tRNA(Ile). As IleRS can inadvertently accommodate and process structurally similar amino acids such as valine, to avoid such errors it has two additional distinct tRNA(Ile)-dependent editing activities. One activity is designated as 'pretransfer' editing and involves the hydrolysis of activated Val-AMP. The other activity is designated 'posttransfer' editing and involves deacylation of mischarged Val-tRNA(Ile). This chain is Isoleucine--tRNA ligase, found in Natronomonas pharaonis (strain ATCC 35678 / DSM 2160 / CIP 103997 / JCM 8858 / NBRC 14720 / NCIMB 2260 / Gabara) (Halobacterium pharaonis).